The chain runs to 403 residues: Tyrosine--tRNA ligase (403 aa).

Positions 42 to 51 (PTAPDLHLGH) match the 'HIGH' region motif. A 'KMSKS' region motif is present at residues 226 to 230 (KMSKS). Lys229 serves as a coordination point for ATP. An S4 RNA-binding domain is found at 339–400 (LRIASLLTAA…GKRNFARVSL (62 aa)).

The protein belongs to the class-I aminoacyl-tRNA synthetase family. TyrS type 2 subfamily. Homodimer.

It localises to the cytoplasm. The enzyme catalyses tRNA(Tyr) + L-tyrosine + ATP = L-tyrosyl-tRNA(Tyr) + AMP + diphosphate + H(+). Functionally, catalyzes the attachment of tyrosine to tRNA(Tyr) in a two-step reaction: tyrosine is first activated by ATP to form Tyr-AMP and then transferred to the acceptor end of tRNA(Tyr). The polypeptide is Tyrosine--tRNA ligase (Xanthomonas oryzae pv. oryzae (strain MAFF 311018)).